The sequence spans 272 residues: MTDYIPTFRFDGHLTIVTGACGGLAEALIKGLLAYGSDIALLDIDQEKTAAKQAEYHKYATEELKLKEVPKMGSYACDISDSDTVHKVFAQVAKDFGKLPLHLVNTAGYCENFPCEDYPAKNAEKMVKVNLLGSLYVSQAFAKPLIKEGIKGASVVLIGSMSGAIVNDPQNQVVYNMSKAGVIHLAKTLACEWAKYNIRVNSLNPGYIYGPLTKNVINGNEELYNRWISGIPQQRMSEPKEYIGAVLYLLSESAASYTTGASLLVDGGFTSW.

NADP(+) is bound by residues Leu-24 and Asp-78. Ser-160 functions as the Proton donor in the catalytic mechanism. Residues Tyr-175, Lys-179, and Ile-208 each coordinate NADP(+). Tyr-175 functions as the Proton acceptor in the catalytic mechanism. Residue Lys-179 is the Lowers pKa of active site Tyr of the active site.

This sequence belongs to the short-chain dehydrogenases/reductases (SDR) family.

It carries out the reaction xylitol + NAD(+) = L-xylulose + NADH + H(+). It catalyses the reaction D-arabinitol + NAD(+) = D-ribulose + NADH + H(+). NADH-dependent L-xylulose reductase; part of the yeast pathway for L-arabinose catabolism. Reversibly converts L-xylulose to xylitol and D-ribulose to D-arabinitol. It has a much lower activity with D-xylulose. Sugar alcohols can serve as a substrate when the hydroxyl group of C-2 is in the L- and the hydroxyl group of the C-3 is in the D-configuration. Also seems to be specific for sugar alcohols that have not more than 5 carbons since no activity is observed with dulcitol (galactitol), which has the hydroxyl group of C-2 in L- and of C-3 in D-configuration, but is a six-carbon sugar alcohol. The polypeptide is NADH-dependent L-xylulose reductase (Ambrosiozyma monospora (Yeast)).